A 131-amino-acid chain; its full sequence is FTQRRMKLGFTQADVGLALGTLYGNVFSQTTICRFEALQLSFKNMCKLKPLLNKWLEEADSSTGSPTSIDKIAAQGRKRKKRTSIEVSVKGALESHFLKCPKPSAQEITNLADSLQLEKEVVRVWFCNNLQ.

Positions 1 to 60 (FTQRRMKLGFTQADVGLALGTLYGNVFSQTTICRFEALQLSFKNMCKLKPLLNKWLEEAD) constitute a POU-specific domain. A DNA-binding region (homeobox) is located at residues 78–131 (KRKKRTSIEVSVKGALESHFLKCPKPSAQEITNLADSLQLEKEVVRVWFCNNLQ).

Belongs to the POU transcription factor family. Class-3 subfamily. Homodimer. In terms of tissue distribution, brain.

It localises to the nucleus. Functionally, transcription factor that acts synergistically with SOX11 and SOX4. Plays a role in neuronal development. Is implicated in an enhancer activity at the embryonic met-mesencephalic junction; the enhancer element contains the octamer motif (5'-ATTTGCAT-3'). The sequence is that of POU domain, class 3, transcription factor 3 (POU3F3) from Sus scrofa (Pig).